The following is a 345-amino-acid chain: D-alanine--D-alanine ligase (345 aa).

One can recognise an ATP-grasp domain in the interval 137–342; it reads KAAFSAAGLP…LEELVHQLLE (206 aa). 169-224 serves as a coordination point for ATP; that stretch reads ETQLGYPCFIKPANLGSSVGISKATNRSELQAGLDLAASHDSRLLVEKGLQVRELE. Mg(2+)-binding residues include D295, E309, and N311.

The protein belongs to the D-alanine--D-alanine ligase family. It depends on Mg(2+) as a cofactor. Mn(2+) is required as a cofactor.

It localises to the cytoplasm. The catalysed reaction is 2 D-alanine + ATP = D-alanyl-D-alanine + ADP + phosphate + H(+). Its pathway is cell wall biogenesis; peptidoglycan biosynthesis. Functionally, cell wall formation. The protein is D-alanine--D-alanine ligase of Synechococcus sp. (strain RCC307).